Reading from the N-terminus, the 73-residue chain is Exodeoxyribonuclease 7 small subunit (73 aa).

It belongs to the XseB family. Heterooligomer composed of large and small subunits.

Its subcellular location is the cytoplasm. The enzyme catalyses Exonucleolytic cleavage in either 5'- to 3'- or 3'- to 5'-direction to yield nucleoside 5'-phosphates.. In terms of biological role, bidirectionally degrades single-stranded DNA into large acid-insoluble oligonucleotides, which are then degraded further into small acid-soluble oligonucleotides. The protein is Exodeoxyribonuclease 7 small subunit of Clostridium novyi (strain NT).